A 93-amino-acid chain; its full sequence is Small ribosomal subunit protein uS19 (93 aa).

Belongs to the universal ribosomal protein uS19 family.

Protein S19 forms a complex with S13 that binds strongly to the 16S ribosomal RNA. The polypeptide is Small ribosomal subunit protein uS19 (Ehrlichia ruminantium (strain Welgevonden)).